The chain runs to 781 residues: Transcription factor Sp3 (781 aa).

Positions 1–12 are enriched in basic and acidic residues; it reads MTAPEKPVKQEE. Disordered stretches follow at residues 1–53 and 65–88; these read MTAP…AAQD and TCSK…AGAP. Residues 20 to 31 show a composition bias toward gly residues; that stretch reads SGGGGGGGGGHG. A compositionally biased stretch (low complexity) spans 32–53; that stretch reads EYLQQQQQHGNGAVAAAAAAQD. S73 carries the post-translational modification Phosphoserine. K120 participates in a covalent cross-link: Glycyl lysine isopeptide (Lys-Gly) (interchain with G-Cter in SUMO). A transactivation domain (Gln-rich) region spans residues 138-237; that stretch reads QYVLPLQNLQ…IPQTGQVQVQ (100 aa). A disordered region spans residues 301–338; that stretch reads QAMDSSDNSERTGERVSPDINETNTDTDLFVPTSSSSQ. Positions 308 to 317 are enriched in basic and acidic residues; sequence NSERTGERVS. Residues 320–338 show a composition bias toward polar residues; that stretch reads INETNTDTDLFVPTSSSSQ. A transactivation domain (Gln-rich) region spans residues 350–499; the sequence is QQNTNSLTTS…TPVQTLTLGQ (150 aa). A 9aaTAD motif is present at residues 461–469; sequence VTWQTFQVQ. The segment at 534 to 620 is repressor domain; it reads IQLHPGENAD…RGTNLGKKKQ (87 aa). Position 551 is an N6-acetyllysine; alternate (K551). K551 is covalently cross-linked (Glycyl lysine isopeptide (Lys-Gly) (interchain with G-Cter in SUMO); alternate). K551 is covalently cross-linked (Glycyl lysine isopeptide (Lys-Gly) (interchain with G-Cter in SUMO1); alternate). A Glycyl lysine isopeptide (Lys-Gly) (interchain with G-Cter in SUMO2); alternate cross-link involves residue K551. A phosphoserine mark is found at S563 and S566. K593 participates in a covalent cross-link: Glycyl lysine isopeptide (Lys-Gly) (interchain with G-Cter in SUMO2). Residues 621-645 form a C2H2-type 1 zinc finger; it reads HICHIPGCGKVYGKTSHLRAHLRWH. S646 carries the post-translational modification Phosphoserine. 2 consecutive C2H2-type zinc fingers follow at residues 651–675 and 681–703; these read FVCN…RRTH and FVCP…IKTH.

The protein belongs to the Sp1 C2H2-type zinc-finger protein family. In terms of assembly, interacts with HLTF; the interaction may be required for basal transcriptional activity of HLTF. Interacts with HDAC1; the interaction deacetylates SP3 and regulates its transcriptional activity. Interacts with HDAC2 (preferably the CK2-phosphorylated form); the interaction deacetylates SP3 and regulates its transcriptional activity. Interacts with MEIS2 isoform 4 and PBX1 isoform PBX1a. Not glycosylated. Post-translationally, acetylated by histone acetyltransferase p300, deacetylated by HDACs. Acetylation/deacetylation states regulate transcriptional activity. Acetylation appears to activate transcription. Alternate sumoylation and acetylation at Lys-551 also control transcriptional activity. Ceramides can also regulate acetylation/deacetylation events through altering the interaction of HDAC with SP3. In vitro, C(18)-ceramides, but not C(16)-ceramides, increase the interaction of HDAC1 with SP3 and enhance the deacetylation of SP3 and the subsequent repression of the TERT promoter. In terms of processing, sumoylated on all isoforms. Sumoylated on 2 sites in longer isoforms with Lys-551 being the major site. Sumoylation at this site promotes nuclear localization to the nuclear periphery, nuclear dots and PML nuclear bodies. Sumoylation on Lys-551 represses the transactivation activity, except for the largest isoform, L-Sp3, which has little effect on transactivation. Alternate sumoylation and acetylation at Lys-551 also control transcriptional activity. Ubiquitously expressed.

The protein localises to the nucleus. Its subcellular location is the PML body. Functionally, transcriptional factor that can act as an activator or repressor depending on isoform and/or post-translational modifications. Binds to GT and GC boxes promoter elements. Competes with SP1 for the GC-box promoters. Weak activator of transcription but can activate a number of genes involved in different processes such as cell-cycle regulation, hormone-induction and house-keeping. The sequence is that of Transcription factor Sp3 (SP3) from Homo sapiens (Human).